The primary structure comprises 766 residues: Hypoxia-inducible factor 1-alpha (766 aa).

Residues 1–26 (MDTGVVPEKKSRVSSDRRKEKSRDAA) are disordered. Over residues 7 to 26 (PEKKSRVSSDRRKEKSRDAA) the composition is skewed to basic and acidic residues. The bHLH domain occupies 17 to 70 (RRKEKSRDAARCRRGKESEVFYELAQELPLPHSVTSNLDKASIMRLAISYLHMR). 2 PAS domains span residues 82 to 159 (EERE…TSKK) and 230 to 300 (PHPS…FAKG). In terms of domain architecture, PAC spans 304–347 (TGQYRMLAKRGGFVWVETQATVIYNNKNSQPQCVVCVNYVLSGI). Residues 361-383 (DMRPVKKELEEEESSEPEVSPVL) form a disordered region. Position 426 is a 4-hydroxyproline (P426). The tract at residues 475–509 (DQHLVPNTSVDTTEVSTGPDSSSTPGSHSFTEPDS) is disordered. Over residues 479-489 (VPNTSVDTTEV) the composition is skewed to polar residues. The span at 490–503 (STGPDSSSTPGSHS) shows a compositional bias: low complexity. A 4-hydroxyproline modification is found at P559. The Nuclear localization signal signature appears at 718–721 (LLGI). N743 is subject to (3S)-3-hydroxyasparagine.

Efficient DNA binding requires heterodimerization of an alpha and a beta/ARNT subunit. In terms of processing, in normoxia, is hydroxylated on Pro-426 and Pro-559. The hydroxylated prolines promote interaction with VHL, initiating rapid ubiquitination and subsequent proteasomal degradation. Under hypoxia, proline hydroxylation is impaired and ubiquitination is attenuated, resulting in stabilization. Post-translationally, in normoxia, is hydroxylated on Asn-743, thus abrogating interaction with CREBBP and EP300 and preventing transcriptional activation. The iron and 2-oxoglutarate dependent 3-hydroxylation of asparagine is (S) stereospecific within HIF CTAD domains.

It is found in the cytoplasm. The protein resides in the nucleus. It localises to the nucleus speckle. With respect to regulation, induced by reactive oxygen species (ROS). Functionally, functions as a master transcriptional regulator of the adaptive response to hypoxia. Under hypoxic conditions, activates the transcription of over 40 genes, including erythropoietin, glucose transporters, glycolytic enzymes, vascular endothelial growth factor, HILPDA, and other genes whose protein products increase oxygen delivery or facilitate metabolic adaptation to hypoxia. Plays an essential role in embryonic vascularization, tumor angiogenesis and pathophysiology of ischemic disease. The polypeptide is Hypoxia-inducible factor 1-alpha (hif1a) (Oncorhynchus mykiss (Rainbow trout)).